Here is a 274-residue protein sequence, read N- to C-terminus: DNA damage-inducible protein D (274 aa).

The protein is DNA damage-inducible protein D (dinD) of Escherichia coli (strain K12).